The following is a 436-amino-acid chain: MIDPQLLRKDIAAVAARLATRKFQLDVEKFNALESERKSLQTRTEELQAKRNQLSKAIGMKKGKGEGAAAEMAEVTQVNADMESGSSRLAVLQAEISDFLMGIPNLPDESVPASKDETENKEVKRWGEQPIFDFEVKDHVDLGGPLGLDFEVAAKISGSRFIVLKGPIARLHRALAQFMIDTHATEHQYQEVYAPYMVNAASMRGTGQLPKFEEDLFKVPRQMGGEDGNGEAKTENFYLIPTAEVPVTNLVRDEIVNTDNLPMKFVAHTPCFRSEAGSYGRDVRGMIRQHQFDKVELVQITKPEDSMQALEDLTGHAERILELLELPYRKVLLCTGDMGFGSTKTYDLEVWVPSQNAYREISSCSSMGDFQARRMQARFKVGQGKPELVHTLNGSGLAVGRALVALLENKQQVDGSIAIPKALQPYLGGLEVLKPI.

242 to 244 (TAE) contributes to the L-serine binding site. 273–275 (RSE) contributes to the ATP binding site. Residue Glu296 participates in L-serine binding. 360–363 (EISS) contacts ATP. Ser395 is an L-serine binding site.

It belongs to the class-II aminoacyl-tRNA synthetase family. Type-1 seryl-tRNA synthetase subfamily. As to quaternary structure, homodimer. The tRNA molecule binds across the dimer.

The protein resides in the cytoplasm. It catalyses the reaction tRNA(Ser) + L-serine + ATP = L-seryl-tRNA(Ser) + AMP + diphosphate + H(+). The catalysed reaction is tRNA(Sec) + L-serine + ATP = L-seryl-tRNA(Sec) + AMP + diphosphate + H(+). The protein operates within aminoacyl-tRNA biosynthesis; selenocysteinyl-tRNA(Sec) biosynthesis; L-seryl-tRNA(Sec) from L-serine and tRNA(Sec): step 1/1. In terms of biological role, catalyzes the attachment of serine to tRNA(Ser). Is also able to aminoacylate tRNA(Sec) with serine, to form the misacylated tRNA L-seryl-tRNA(Sec), which will be further converted into selenocysteinyl-tRNA(Sec). The protein is Serine--tRNA ligase of Polynucleobacter necessarius subsp. necessarius (strain STIR1).